A 434-amino-acid polypeptide reads, in one-letter code: Histidinol dehydrogenase (434 aa).

Residues Tyr-130, Gln-188, and Asn-211 each coordinate NAD(+). Positions 237, 259, and 262 each coordinate substrate. Zn(2+) contacts are provided by Gln-259 and His-262. Catalysis depends on proton acceptor residues Glu-326 and His-327. Residues His-327, Asp-360, Glu-414, and His-419 each contribute to the substrate site. Asp-360 is a binding site for Zn(2+). His-419 serves as a coordination point for Zn(2+).

The protein belongs to the histidinol dehydrogenase family. As to quaternary structure, homodimer. It depends on Zn(2+) as a cofactor.

The enzyme catalyses L-histidinol + 2 NAD(+) + H2O = L-histidine + 2 NADH + 3 H(+). Its pathway is amino-acid biosynthesis; L-histidine biosynthesis; L-histidine from 5-phospho-alpha-D-ribose 1-diphosphate: step 9/9. In terms of biological role, catalyzes the sequential NAD-dependent oxidations of L-histidinol to L-histidinaldehyde and then to L-histidine. This chain is Histidinol dehydrogenase, found in Salmonella typhi.